The primary structure comprises 286 residues: MTFSQIILTLQNYWQEQGCVILQPYDMPAGAGTYHQATFLRSLGPKPWATAYVAPSRRPTDGRYGENPNRLGAYYQFQVLIKPSPENIQELYLKSLERLGLNLKNHDIRFVEDNWESPTLGAWGLGWEVWLDGMEVTQFTYFQQVGGIACELISGEITYGLERLAMYLQDVNSVYDIVWDDSNGSIVTYADVHKQGEYEWSKYNFEVANVDMLFNQFENAFNECKRCLEAKISLPAYDYCMLAAHTFNVLDARGAISVTQRQDYILKIRELAKECALTYKESLEQK.

Belongs to the class-II aminoacyl-tRNA synthetase family. In terms of assembly, tetramer of two alpha and two beta subunits.

Its subcellular location is the cytoplasm. It catalyses the reaction tRNA(Gly) + glycine + ATP = glycyl-tRNA(Gly) + AMP + diphosphate. The chain is Glycine--tRNA ligase alpha subunit from Campylobacter concisus (strain 13826).